A 328-amino-acid polypeptide reads, in one-letter code: Tryptophan--tRNA ligase (328 aa).

ATP is bound by residues 10–12 (QAT) and 18–19 (GN). The 'HIGH' region signature appears at 11–19 (ATGSLHLGN). D134 is a binding site for L-tryptophan. ATP-binding positions include 146–148 (GED), I186, and 195–199 (KMSKS). Residues 195–199 (KMSKS) carry the 'KMSKS' region motif.

The protein belongs to the class-I aminoacyl-tRNA synthetase family. Homodimer.

It localises to the cytoplasm. It catalyses the reaction tRNA(Trp) + L-tryptophan + ATP = L-tryptophyl-tRNA(Trp) + AMP + diphosphate + H(+). Its function is as follows. Catalyzes the attachment of tryptophan to tRNA(Trp). The polypeptide is Tryptophan--tRNA ligase (Rickettsia bellii (strain RML369-C)).